We begin with the raw amino-acid sequence, 1258 residues long: Serine/threonine-protein kinase Nek1 (1258 aa).

Residues 4 to 258 enclose the Protein kinase domain; the sequence is YVRLQKIGEG…VNSILEKGFI (255 aa). Residues 10 to 18 and lysine 33 contribute to the ATP site; that span reads IGEGSFGKA. The active-site Proton acceptor is aspartate 128. Phosphothreonine is present on threonine 156. Position 162 is a phosphothreonine; by autocatalysis (threonine 162). A disordered region spans residues 330 to 360; that stretch reads HEKKPLQKHKQAHQTPEKRVNTGEERRKISE. Residues 344–360 show a composition bias toward basic and acidic residues; the sequence is TPEKRVNTGEERRKISE. Phosphoserine occurs at positions 414, 418, 428, and 438. Disordered stretches follow at residues 578-600, 648-669, and 685-704; these read KLRGEKKEANHSEGQEGSEEADM, KSSDVSPPLGQHETGGSPSKQQ, and VDSSLTDTRETSEEMQKTNN. Positions 579–591 are enriched in basic and acidic residues; sequence LRGEKKEANHSEG. A Phosphoserine modification is found at serine 653. Threonine 661 carries the phosphothreonine modification. Position 664 is a phosphoserine (serine 664). Residues 691–700 show a composition bias toward basic and acidic residues; that stretch reads DTRETSEEMQ. Serine 798, serine 834, serine 868, serine 881, serine 1052, and serine 1126 each carry phosphoserine. Residues 1118–1171 are disordered; that stretch reads REQPGEEYSEEEESVLKNSDVEPTANGTDVADEDDNPSSESALNEEWHSDNSDG.

Belongs to the protein kinase superfamily. NEK Ser/Thr protein kinase family. NIMA subfamily. As to quaternary structure, binds to CBY2. Found in a complex with CFAP410, NEK1 and SPATA7. Interacts with CFAP410. Interacts (via Ser-1052 phosphorylated form) with 14-3-3 proteins. The cofactor is Mg(2+). As to expression, high fetal expression in the brain and kidney.

The protein resides in the nucleus. The protein localises to the cytoplasm. It is found in the cytoskeleton. Its subcellular location is the microtubule organizing center. It localises to the centrosome. The enzyme catalyses L-seryl-[protein] + ATP = O-phospho-L-seryl-[protein] + ADP + H(+). It carries out the reaction L-threonyl-[protein] + ATP = O-phospho-L-threonyl-[protein] + ADP + H(+). In terms of biological role, phosphorylates serines and threonines, but also appears to possess tyrosine kinase activity. Involved in DNA damage checkpoint control and for proper DNA damage repair. In response to injury that includes DNA damage, NEK1 phosphorylates VDAC1 to limit mitochondrial cell death. May be implicated in the control of meiosis. Involved in cilium assembly. This is Serine/threonine-protein kinase Nek1 (NEK1) from Homo sapiens (Human).